A 284-amino-acid chain; its full sequence is MLIIETLPLLRQQIRRWRQEGKRVALVPTMGNLHEGHMTLVEDAKTRADVVVVSIFVNPLQFERPDDLARYPRTLQEDCEKLTRHGVDLVFAPAAADVYPAGLEAQTYVDVPALSTILEGASRPGHFRGVSTIVSKLFNLVQPDVACFGEKDYQQLALIRKMVADMGYDINIVGVPIVRAKDGLALSSRNGYLSAQERKIAPQLYKIMQALAEKLALGERQIDDLLADTAEQLRDAGFTPDELFIRDAQSLQPLTVDSKQAIILMAAWLGKARLIDNQQVDLHS.

30-37 contributes to the ATP binding site; the sequence is MGNLHEGH. Catalysis depends on H37, which acts as the Proton donor. Q61 serves as a coordination point for (R)-pantoate. Q61 lines the beta-alanine pocket. 149-152 provides a ligand contact to ATP; the sequence is GEKD. Residue Q155 participates in (R)-pantoate binding. ATP is bound by residues V178 and 186–189; that span reads LSSR.

Belongs to the pantothenate synthetase family. In terms of assembly, homodimer.

The protein resides in the cytoplasm. It carries out the reaction (R)-pantoate + beta-alanine + ATP = (R)-pantothenate + AMP + diphosphate + H(+). It participates in cofactor biosynthesis; (R)-pantothenate biosynthesis; (R)-pantothenate from (R)-pantoate and beta-alanine: step 1/1. Functionally, catalyzes the condensation of pantoate with beta-alanine in an ATP-dependent reaction via a pantoyl-adenylate intermediate. The sequence is that of Pantothenate synthetase from Yersinia enterocolitica serotype O:8 / biotype 1B (strain NCTC 13174 / 8081).